A 272-amino-acid polypeptide reads, in one-letter code: GPN-loop GTPase 3 (272 aa).

12 to 17 (GAGKST) lines the GTP pocket. The Gly-Pro-Asn (GPN)-loop; involved in dimer interface signature appears at 69-71 (GPN). 172-175 (SKMD) serves as a coordination point for GTP. Residues 253 to 272 (QYGEDEEPKVPKDMDDGDFD) form a disordered region.

The protein belongs to the GPN-loop GTPase family. Heterodimers with GPN1 or GPN2. Binds to RNA polymerase II (RNAPII).

Functionally, small GTPase required for proper nuclear import of RNA polymerase II and III (RNAPII and RNAPIII). May act at an RNAP assembly step prior to nuclear import. The chain is GPN-loop GTPase 3 from Cryptococcus neoformans var. neoformans serotype D (strain JEC21 / ATCC MYA-565) (Filobasidiella neoformans).